Here is a 275-residue protein sequence, read N- to C-terminus: 2,3,4,5-tetrahydropyridine-2,6-dicarboxylate N-succinyltransferase (275 aa).

It belongs to the transferase hexapeptide repeat family.

It localises to the cytoplasm. It catalyses the reaction (S)-2,3,4,5-tetrahydrodipicolinate + succinyl-CoA + H2O = (S)-2-succinylamino-6-oxoheptanedioate + CoA. It participates in amino-acid biosynthesis; L-lysine biosynthesis via DAP pathway; LL-2,6-diaminopimelate from (S)-tetrahydrodipicolinate (succinylase route): step 1/3. This is 2,3,4,5-tetrahydropyridine-2,6-dicarboxylate N-succinyltransferase from Burkholderia ambifaria (strain MC40-6).